A 61-amino-acid polypeptide reads, in one-letter code: Small ribosomal subunit protein uS14 (61 aa).

Zn(2+) is bound by residues C24, C27, C40, and C43.

This sequence belongs to the universal ribosomal protein uS14 family. Zinc-binding uS14 subfamily. In terms of assembly, part of the 30S ribosomal subunit. Contacts proteins S3 and S10. Zn(2+) is required as a cofactor.

In terms of biological role, binds 16S rRNA, required for the assembly of 30S particles and may also be responsible for determining the conformation of the 16S rRNA at the A site. The protein is Small ribosomal subunit protein uS14 of Rhodopirellula baltica (strain DSM 10527 / NCIMB 13988 / SH1).